We begin with the raw amino-acid sequence, 184 residues long: F(420)H(2) dehydrogenase subunit B (184 aa).

Positions 1–20 (MGEVKETKTNNSKENPEEEV) are disordered. [4Fe-4S] cluster contacts are provided by cysteine 61, cysteine 62, cysteine 126, and cysteine 156.

It belongs to the complex I 20 kDa subunit family. The FPO complex is composed of at least 13 different subunits. It depends on FAD as a cofactor. The cofactor is [4Fe-4S] cluster.

It is found in the cell inner membrane. The enzyme catalyses methanophenazine + reduced coenzyme F420-(gamma-L-Glu)(n) = dihydromethanophenazine + oxidized coenzyme F420-(gamma-L-Glu)(n) + H(+). Its function is as follows. Component of the F(420)H(2) dehydrogenase (FPO complex) which is part of the energy-conserving F(420)H(2):heterodisulfide oxidoreductase system. The membrane-bound electron transfer system of the complex plays an important role in the metabolism of methylotrophic methanogens when the organisms grow on methanol or methylamines. Catalyzes the oxidation of methanophenazine to dihydromethanophenazine. It shuttles electrons from F(420)H(2), via FAD and iron-sulfur (Fe-S) centers, to methanophenazine (an electron carrier in the membrane). It couples the redox reaction to proton translocation (for every two electrons transferred, two hydrogen ions are translocated across the cytoplasmic membrane), and thus conserves the redox energy in a proton gradient. It also catalyzes the oxidation of F(420)H(2) with quinones such as 2,3-dimethyl-1,4-naphthoquinone, 2-methyl-1,4-naphthoquinone and tetramethyl-p-benzoquinone. This Methanosarcina mazei (strain ATCC BAA-159 / DSM 3647 / Goe1 / Go1 / JCM 11833 / OCM 88) (Methanosarcina frisia) protein is F(420)H(2) dehydrogenase subunit B (fpoB).